The primary structure comprises 350 residues: Holliday junction branch migration complex subunit RuvB (350 aa).

The tract at residues 1 to 184 (MSKTPERLVT…FGIPIRLEFY (184 aa)) is large ATPase domain (RuvB-L). Residues Leu23, Arg24, Gly65, Lys68, Thr69, Thr70, 131–133 (EDF), Arg174, Tyr184, and Arg221 each bind ATP. Thr69 contributes to the Mg(2+) binding site. The segment at 185–255 (TIEELERIVL…LADKALSLLD (71 aa)) is small ATPAse domain (RuvB-S). Positions 258-350 (PIGLDQMDRR…GLFPDQSEED (93 aa)) are head domain (RuvB-H). DNA is bound by residues Arg294, Arg313, and Arg318.

It belongs to the RuvB family. In terms of assembly, homohexamer. Forms an RuvA(8)-RuvB(12)-Holliday junction (HJ) complex. HJ DNA is sandwiched between 2 RuvA tetramers; dsDNA enters through RuvA and exits via RuvB. An RuvB hexamer assembles on each DNA strand where it exits the tetramer. Each RuvB hexamer is contacted by two RuvA subunits (via domain III) on 2 adjacent RuvB subunits; this complex drives branch migration. In the full resolvosome a probable DNA-RuvA(4)-RuvB(12)-RuvC(2) complex forms which resolves the HJ.

It is found in the cytoplasm. The enzyme catalyses ATP + H2O = ADP + phosphate + H(+). Its function is as follows. The RuvA-RuvB-RuvC complex processes Holliday junction (HJ) DNA during genetic recombination and DNA repair, while the RuvA-RuvB complex plays an important role in the rescue of blocked DNA replication forks via replication fork reversal (RFR). RuvA specifically binds to HJ cruciform DNA, conferring on it an open structure. The RuvB hexamer acts as an ATP-dependent pump, pulling dsDNA into and through the RuvAB complex. RuvB forms 2 homohexamers on either side of HJ DNA bound by 1 or 2 RuvA tetramers; 4 subunits per hexamer contact DNA at a time. Coordinated motions by a converter formed by DNA-disengaged RuvB subunits stimulates ATP hydrolysis and nucleotide exchange. Immobilization of the converter enables RuvB to convert the ATP-contained energy into a lever motion, pulling 2 nucleotides of DNA out of the RuvA tetramer per ATP hydrolyzed, thus driving DNA branch migration. The RuvB motors rotate together with the DNA substrate, which together with the progressing nucleotide cycle form the mechanistic basis for DNA recombination by continuous HJ branch migration. Branch migration allows RuvC to scan DNA until it finds its consensus sequence, where it cleaves and resolves cruciform DNA. This is Holliday junction branch migration complex subunit RuvB from Beijerinckia indica subsp. indica (strain ATCC 9039 / DSM 1715 / NCIMB 8712).